The primary structure comprises 161 residues: MAKVQKKPDLSDPKLKAMLKKGMGHNYYGEPAWPNDLLYIFPVVILGSIALCVGLAVLDPAMVGEPADPFATPLEILPEWYLYPVFQILRVVPNKLLGVVLMGSIPLGLMLVPFIENVNKFQNPFRRPVATTVFLFGTLFTLWLGIGATFPIDKSFTLGLF.

Transmembrane regions (helical) follow at residues 37–57 (LLYI…GLAV), 96–116 (LLGV…PFIE), and 132–152 (TVFL…TFPI).

It belongs to the cytochrome b family. PetD subfamily. The 4 large subunits of the cytochrome b6-f complex are cytochrome b6, subunit IV (17 kDa polypeptide, PetD), cytochrome f and the Rieske protein, while the 4 small subunits are PetG, PetL, PetM and PetN. The complex functions as a dimer.

It is found in the cellular thylakoid membrane. In terms of biological role, component of the cytochrome b6-f complex, which mediates electron transfer between photosystem II (PSII) and photosystem I (PSI), cyclic electron flow around PSI, and state transitions. In Cyanothece sp. (strain PCC 7425 / ATCC 29141), this protein is Cytochrome b6-f complex subunit 4.